The primary structure comprises 68 residues: Non-disulfide-bridged peptide 5.6 (68 aa).

The signal sequence occupies residues 1-23 (MKTQVIIFIMAVVFLQLLSQSEA). A propeptide spanning residues 37–68 (ELRNIDLDQFDDMFDEPEISAADMRFLQELLK) is cleaved from the precursor.

It belongs to the non-disulfide-bridged peptide (NDBP) superfamily. Short antimicrobial peptide (group 4) family. Expressed by the venom gland.

It is found in the secreted. It localises to the target cell membrane. Functionally, antibacterial peptide with activity against both Gram-positive and Gram-negative bacteria probably by forming pores in the cell membrane. Also has weak hemolytic activity. Does not show antifungal activity. The protein is Non-disulfide-bridged peptide 5.6 of Hoffmannihadrurus gertschi (Scorpion).